The sequence spans 477 residues: Argininosuccinate lyase (477 aa).

It belongs to the lyase 1 family. Argininosuccinate lyase subfamily.

The protein resides in the cytoplasm. The enzyme catalyses 2-(N(omega)-L-arginino)succinate = fumarate + L-arginine. It functions in the pathway amino-acid biosynthesis; L-arginine biosynthesis; L-arginine from L-ornithine and carbamoyl phosphate: step 3/3. The sequence is that of Argininosuccinate lyase from Acinetobacter baumannii (strain ACICU).